Here is a 796-residue protein sequence, read N- to C-terminus: RNA cytosine-C(5)-methyltransferase NSUN2 (796 aa).

Positions 1-11 (MGRRARDRRRQ) are enriched in basic residues. The tract at residues 1 to 36 (MGRRARDRRRQLQPQQRRERSGGGGGGGDDQAGWAG) is disordered. A compositionally biased stretch (gly residues) spans 22–36 (GGGGGGGDDQAGWAG). S-adenosyl-L-methionine is bound by residues 184–190 (CAAPGSK), Asp-215, Asp-242, and Asp-268. The active-site Nucleophile is the Cys-321. Disordered regions lie at residues 435–501 (WNKR…CGPP) and 707–796 (RKEG…NVKD). Basic and acidic residues-rich tracts occupy residues 467 to 483 (ATEK…KKVQ), 708 to 721 (KEGE…EEVQ), and 733 to 746 (VEDK…KMEA). Residues 774–783 (CSKNTNSHIN) show a composition bias toward polar residues. Positions 784 to 796 (QESKDMNTNNVKD) are enriched in basic and acidic residues.

Belongs to the class I-like SAM-binding methyltransferase superfamily. RsmB/NOP family. TRM4 subfamily.

The protein localises to the nucleus. It localises to the nucleolus. It is found in the cytoplasm. The protein resides in the mitochondrion. Its subcellular location is the cytoskeleton. The protein localises to the spindle. It localises to the secreted. It is found in the extracellular exosome. The catalysed reaction is cytidine(48) in tRNA + S-adenosyl-L-methionine = 5-methylcytidine(48) in tRNA + S-adenosyl-L-homocysteine + H(+). It carries out the reaction cytidine(49) in tRNA + S-adenosyl-L-methionine = 5-methylcytidine(49) in tRNA + S-adenosyl-L-homocysteine + H(+). It catalyses the reaction cytidine(50) in tRNA + S-adenosyl-L-methionine = 5-methylcytidine(50) in tRNA + S-adenosyl-L-homocysteine + H(+). The enzyme catalyses cytidine(34) in tRNA precursor + S-adenosyl-L-methionine = 5-methylcytidine(34) in tRNA precursor + S-adenosyl-L-homocysteine + H(+). The catalysed reaction is a cytidine in mRNA + S-adenosyl-L-methionine = a 5-methylcytidine in mRNA + S-adenosyl-L-homocysteine + H(+). In terms of biological role, RNA cytosine C(5)-methyltransferase that methylates cytosine to 5-methylcytosine (m5C) in various RNAs, such as tRNAs, mRNAs and some long non-coding RNAs (lncRNAs). Involved in various processes, such as epidermal stem cell differentiation, testis differentiation and maternal to zygotic transition during early development: acts by increasing protein synthesis; cytosine C(5)-methylation promoting tRNA stability and preventing mRNA decay. Methylates cytosine to 5-methylcytosine (m5C) at positions 34 and 48 of intron-containing tRNA(Leu)(CAA) precursors, and at positions 48, 49 and 50 of tRNA(Gly)(GCC) precursors. tRNA methylation is required generation of RNA fragments derived from tRNAs (tRFs). Also mediates C(5)-methylation of mitochondrial tRNAs. Catalyzes cytosine C(5)-methylation of mRNAs, leading to stabilize them and prevent mRNA decay. Cytosine C(5)-methylation of mRNAs also regulates mRNA export. Also mediates cytosine C(5)-methylation of non-coding RNAs, such as vault RNAs (vtRNAs), promoting their processing into regulatory small RNAs. Required for proper spindle assembly and chromosome segregation, independently of its methyltransferase activity. The sequence is that of RNA cytosine-C(5)-methyltransferase NSUN2 from Gallus gallus (Chicken).